The primary structure comprises 269 residues: Flagellar brake protein YcgR (269 aa).

Positions 1–42 are disordered; sequence MLREPMNQHDAPGPAETGADSDAETDAETDAETDAGAADDRY. The span at 19–33 shows a compositional bias: acidic residues; that stretch reads ADSDAETDAETDAET. Residues 149–261 form the PilZ domain; that stretch reads QRRRHFRART…MENFLQRLVF (113 aa).

Belongs to the YcgR family. Monomer. Interacts with the flagellar basal bodies.

The protein resides in the bacterial flagellum basal body. Acts as a flagellar brake, regulating swimming and swarming in a bis-(3'-5') cyclic diguanylic acid (c-di-GMP)-dependent manner. Binds 1 c-di-GMP dimer per subunit. Increasing levels of c-di-GMP lead to decreased motility. This chain is Flagellar brake protein YcgR, found in Cupriavidus taiwanensis (strain DSM 17343 / BCRC 17206 / CCUG 44338 / CIP 107171 / LMG 19424 / R1) (Ralstonia taiwanensis (strain LMG 19424)).